Reading from the N-terminus, the 505-residue chain is Amidophosphoribosyltransferase (505 aa).

Cysteine 2 serves as the catalytic Nucleophile. Residues 2–236 (CGIVGIAGVM…PGEAIYITEE (235 aa)) enclose the Glutamine amidotransferase type-2 domain. Mg(2+) is bound by residues threonine 305, aspartate 367, and aspartate 368.

It in the C-terminal section; belongs to the purine/pyrimidine phosphoribosyltransferase family. Homotetramer. Mg(2+) serves as cofactor.

The catalysed reaction is 5-phospho-beta-D-ribosylamine + L-glutamate + diphosphate = 5-phospho-alpha-D-ribose 1-diphosphate + L-glutamine + H2O. Its pathway is purine metabolism; IMP biosynthesis via de novo pathway; N(1)-(5-phospho-D-ribosyl)glycinamide from 5-phospho-alpha-D-ribose 1-diphosphate: step 1/2. Inhibited by iodoacetamide and by the glutamine analogs chloroketone and DON. Catalyzes the formation of phosphoribosylamine from phosphoribosylpyrophosphate (PRPP) and glutamine. Can also use NH(3) in place of glutamine. This is Amidophosphoribosyltransferase from Escherichia coli (strain K12).